We begin with the raw amino-acid sequence, 382 residues long: Galactokinase (382 aa).

34–37 is a substrate binding site; the sequence is EHTD. 124–130 contributes to the ATP binding site; that stretch reads GAGLSSS. Positions 130 and 162 each coordinate Mg(2+). D174 acts as the Proton acceptor in catalysis. Y223 provides a ligand contact to substrate.

This sequence belongs to the GHMP kinase family. GalK subfamily.

Its subcellular location is the cytoplasm. It carries out the reaction alpha-D-galactose + ATP = alpha-D-galactose 1-phosphate + ADP + H(+). It participates in carbohydrate metabolism; galactose metabolism. Catalyzes the transfer of the gamma-phosphate of ATP to D-galactose to form alpha-D-galactose-1-phosphate (Gal-1-P). The chain is Galactokinase from Escherichia coli O17:K52:H18 (strain UMN026 / ExPEC).